The sequence spans 243 residues: Probable transcriptional regulatory protein Tbd_2215 (243 aa).

It belongs to the TACO1 family.

It localises to the cytoplasm. This is Probable transcriptional regulatory protein Tbd_2215 from Thiobacillus denitrificans (strain ATCC 25259 / T1).